A 244-amino-acid chain; its full sequence is Glutathione S-transferase theta-2 (244 aa).

The 81-residue stretch at 2–82 (GLELYLDLLS…YLSSKYQVAD (81 aa)) folds into the GST N-terminal domain. Glutathione-binding positions include 40 to 41 (HM), 53 to 54 (KV), 66 to 67 (ES), and 104 to 107 (DNIR). The GST C-terminal domain maps to 88 to 230 (DLQARAQVHE…AKKMLPVPPP (143 aa)).

The protein belongs to the GST superfamily. Theta family. In terms of assembly, homodimer. In terms of tissue distribution, in liver, highest expression found in central vein limiting plate hepatocytes. Also expressed in interlobular bile duct epithelial cells. In lung, expressed in club cells and ciliated cells of the bronchiolar epithelium and in type II alveolar cells of the lung parenchyma.

It localises to the cytoplasm. It is found in the cytosol. The protein localises to the nucleus. It catalyses the reaction RX + glutathione = an S-substituted glutathione + a halide anion + H(+). In terms of biological role, conjugation of reduced glutathione to a wide number of exogenous and endogenous hydrophobic electrophiles. This chain is Glutathione S-transferase theta-2, found in Mus musculus (Mouse).